The following is a 2074-amino-acid chain: MWISSRFFVILLLLNLDNTCSEPFEAHLRGPGFVMEPPGRVEFSNSSGGWLDCSASGSPQPTVDWVHADGSAVTEIHGVRRVLRNGTLVLMPFAAAAYHQDVHNTIYRCIASNSVGRIVSRDVQVRAVVAQAYKVDVEVLSAARGCTAILRCVVPTFVKELVRVVSWVHEPAIYIYPSLQGDGKFHLLPTGELLIHNLQESDESQSFRCRSMHRLTRQVVVSSPTRLRINSHRGIISPSVVEHTAHVQVSQDEGAVLLCVAQGCPSPEYSWFTHNGAGPLPVLSGPRVRLLGPILAIEAVTGEDSGVYKCTAGNVGGEASAELRLTVATPIQVEISPNVLSVHMGGTAEFRCLVTSNGSPVGMQNILWYKDGRQLPSSGRVEDTLVVPRVSRENRGMYQCVVRRPEGDTFQATAELQLGDAPPVLLYSFIEQTLQPGPAVSLKCSAAGNPTPQISWTLDGFPLPSNGRFMIGQYITVHGDVISHVNISHVMVEDGGEYACIAENRAGRVQHAARLNIYGLPYIRLIPKVTAVSGETLNLKCPVAGYPIEEIHWERGGRELPDDIRQRVQPDGSLTISPVQKNSDSGVYTCWARNKQGHSARRSGEVTVIVPPSIEPFAFQEGLAEGMRTRTVCGVSRGDPPLKLIWLKDGDPLPDLLGANVTMLDQYSSLLSIPSLSATHSGEYTCVAKNPAAEIKYTALLQVKVPPRWIVEPVDANVERNRHIMLHCQAQGVPTPSIVWKKATGSKSGEYEEVRERPFTKLLGNGSLLLQHVKEDREGFYLCQANNGIGTGIGKVIQLKVNSSPYFSSTSRSVMVKKGDTALLQCAVSGDKPINIVWMRSGKNTLNPSTNYKISVKQEATPDGVSAELQIRTVDATDSGPYFCRASNLYGNDQQLVQLQVQEPPLPPSVLEAAMISSRSVNIKWQPKTLGTGDVTKYIVEFREADPLFVDQWQQIEVKDPPHFNAMIENLKPATRYAFRVIAEGSAGRSAPSQELIVRTEPQRPAGPPLSLSARPLSSTELLISWVAPLPELRHGDIQGYNVGYKLSSSGNTAYNFTSVSGDGDGGNGELLLSGLAKFARYTVVVQAFNQVGPGPLSEPTAAQTMEDVPSRPPEDVRCAALSSQSLQVSWQPPPIYHTNGLLQGYKLIFEPIIDDIQPSKDEVESRKTTALTMVLTGLRKYTNYSIQVLAHTRMGDGVVSKPLFCHSEEDVPEAPADIKVVSSSSQSLYISWLPPNEPNGVITKYSLYTRVVNGREELNNEKRSLPSQQAYYEAKGLHPHMEYQFWVTASTRVGEGKSSRVSSQITTNRIPARIISFGGPVVRPWRSTVTLPCTAVGKPKREWFKSDVALRQGGLHNSQLLDSGDLIISSLQLADGGNYSCQVDNGIGTDRLTHTLIVQVPPTAPVLYVTSATSSSILMHWKCGFTGNAPITGYTLFYRRANGNTDEMQLSRHASSHELKGLMCGSTYQIHLSAQNKVGTSPTSTILHVRTQGQSPGHPASTALLAPNSTSLLVRLHSWPDNGCPLLYFVLQYRAVTDDPDAEWVLVSNALKPQRRIVINNLQPSTLYQLRMEAHNVAGISQAEFNFVTLTKDGDPPPPEIMHRGRSGQTTVIFANINLLIPTIAAVSGMFCTIIMIIVCYRHMLKNAPPLAEQSQIQKESLENRANSEAAQRERYYATIHKVSMQNNDKIPETSEDISPYATFQLSEAGGNMSQPHHGGPANTLLHSFMYHERALAEGCSSPPPAAVLNPPTTTTHHHHHHQRPLKTIHNYYQTSPFHNISKNRRRHSRKTEPESEESESDQDQLTSSRTESSNQHEGKIKHSIIYHGAQSSTSSDLSPMSEQKSLPRRGRSRYHHQQYQFSTNTTPRHHNSNKMNNNTTSNTNTTATNTTATPSTSSNSNKILSPRGGNLKSISSTFKSQDSIQCHIPTLVKSPSISTQQQKQFHKQQLQNSSTNNSQHSSSNPNSSSLKQQQPLLITPKLHQLEANGQELLGLDGIGNSPLVACMPPSSQFRPIPHKSIMPAHEPPHHHNHSQQSHPHQQQQQQQHPGTLLNPSTAMLSSKFFTAPTLPK.

The first 21 residues, 1–21 (MWISSRFFVILLLLNLDNTCS), serve as a signal peptide directing secretion. At 22-1619 (EPFEAHLRGP…QTTVIFANIN (1598 aa)) the chain is on the extracellular side. Ig-like C2-type domains are found at residues 31 to 120 (PGFV…RIVS), 238 to 326 (PSVV…LRLT), 330 to 417 (PIQV…AELQ), 422 to 516 (PPVL…ARLN), 521 to 607 (PYIR…GEVT), 612 to 698 (PSIE…IKYT), 707 to 802 (PRWI…LKVN), and 805 to 902 (PYFS…LQVQ). 8 disulfide bridges follow: Cys-53-Cys-109, Cys-259-Cys-310, Cys-352-Cys-400, Cys-444-Cys-500, Cys-541-Cys-590, Cys-633-Cys-686, Cys-728-Cys-783, and Cys-826-Cys-884. Fibronectin type-III domains lie at 907-1003 (PPSV…TEPQ), 1008-1108 (PPLS…TMED), 1113-1211 (PPED…SEED), and 1215-1311 (APAD…TNRI). An Ig-like C2-type 9 domain is found at 1312-1400 (PARIISFGGP…DRLTHTLIVQ (89 aa)). A disulfide bridge connects residues Cys-1334 and Cys-1382. Fibronectin type-III domains are found at residues 1402–1495 (PPTA…TQGQ) and 1496–1595 (SPGH…TKDG). A helical membrane pass occupies residues 1620 to 1640 (LLIPTIAAVSGMFCTIIMIIV). At 1641–2074 (CYRHMLKNAP…KFFTAPTLPK (434 aa)) the chain is on the cytoplasmic side. Disordered stretches follow at residues 1739–1766 (EGCSSPPPAAVLNPPTTTTHHHHHHQRP), 1778–1917 (PFHN…KSIS), 1936–1974 (SPSISTQQQKQFHKQQLQNSSTNNSQHSSSNPNSSSLKQ), and 2011–2074 (PSSQ…TLPK). The segment covering 1757–1766 (THHHHHHQRP) has biased composition (basic residues). Positions 1831 to 1846 (AQSSTSSDLSPMSEQK) are enriched in polar residues. The span at 1848-1858 (LPRRGRSRYHH) shows a compositional bias: basic residues. Positions 1859–1868 (QQYQFSTNTT) are enriched in polar residues. 3 stretches are compositionally biased toward low complexity: residues 1875 to 1903 (NKMNNNTTSNTNTTATNTTATPSTSSNSN), 1942 to 1974 (QQQKQFHKQQLQNSSTNNSQHSSSNPNSSSLKQ), and 2036 to 2051 (SQQSHPHQQQQQQQHP). The segment covering 2055–2066 (LNPSTAMLSSKF) has biased composition (polar residues).

The protein resides in the membrane. Cell adhesion molecule. This chain is Cell adhesion molecule Dscam2 (Dscam2), found in Drosophila melanogaster (Fruit fly).